The following is a 207-amino-acid chain: Venom allergen 5 (207 aa).

Disulfide bonds link Cys4-Cys16, Cys8-Cys105, Cys29-Cys97, and Cys173-Cys190. Residues Val48 to Tyr192 enclose the SCP domain.

The protein belongs to the CRISP family. Venom allergen 5-like subfamily. In terms of assembly, monomer. As to expression, expressed by the venom gland.

The protein localises to the secreted. This Polybia scutellaris rioplatensis (Camoati) protein is Venom allergen 5.